Consider the following 190-residue polypeptide: MRLFGYARVSTSQQSLDIQIKGLKEAGVKASRIFTDKASGSSTDRKGLDLLRMKVEEGDVTLVKKLDRLGRDTADMIQLTKEFDAQGVAVRFIDDGISTDGEMGKMVVTILSAVAQAERRRILERTNEGRQEAKLKGIRFGRKRIIDRNSVLALHQQGTGATDIARRLSIARSTVYKILEDESRVNLSKI.

Residues 2-137 (RLFGYARVST…EGRQEAKLKG (136 aa)) form the Resolvase/invertase-type recombinase catalytic domain. The active-site O-(5'-phospho-DNA)-serine intermediate is the S10. A DNA-binding region (H-T-H motif) is located at residues 161 to 180 (ATDIARRLSIARSTVYKILE).

It belongs to the site-specific recombinase resolvase family.

Site-specific recombination protein. This is R46 site-specific recombinase (tnpR) from Escherichia coli.